The sequence spans 240 residues: Transmembrane emp24 domain-containing protein 6 (240 aa).

A signal peptide spans 1–21 (MSPLLFGAGLVVLNLVTSARS). Residues 22–200 (QKTEPLSGSG…FFLIQSNYNY (179 aa)) are Lumenal-facing. Residues 53–138 (TECFWQFAHQ…SVQVYLNFGV (86 aa)) enclose the GOLD domain. Asn107 and Asn156 each carry an N-linked (GlcNAc...) asparagine glycan. The chain crosses the membrane as a helical span at residues 201-223 (VNWWSTAQSLVIILSGILQLYFL). Over 224–240 (KRLFNVPTTTDTKKPRC) the chain is Cytoplasmic.

Belongs to the EMP24/GP25L family.

It is found in the endoplasmic reticulum membrane. The chain is Transmembrane emp24 domain-containing protein 6 (TMED6) from Homo sapiens (Human).